The following is a 162-amino-acid chain: 2-amino-4-hydroxy-6-hydroxymethyldihydropteridine pyrophosphokinase (162 aa).

Belongs to the HPPK family.

The catalysed reaction is 6-hydroxymethyl-7,8-dihydropterin + ATP = (7,8-dihydropterin-6-yl)methyl diphosphate + AMP + H(+). Its pathway is cofactor biosynthesis; tetrahydrofolate biosynthesis; 2-amino-4-hydroxy-6-hydroxymethyl-7,8-dihydropteridine diphosphate from 7,8-dihydroneopterin triphosphate: step 4/4. Its function is as follows. Catalyzes the transfer of pyrophosphate from adenosine triphosphate (ATP) to 6-hydroxymethyl-7,8-dihydropterin, an enzymatic step in folate biosynthesis pathway. The polypeptide is 2-amino-4-hydroxy-6-hydroxymethyldihydropteridine pyrophosphokinase (folK) (Streptococcus pyogenes serotype M3 (strain ATCC BAA-595 / MGAS315)).